A 922-amino-acid polypeptide reads, in one-letter code: Coronin-7 (922 aa).

4 WD repeats span residues 75–115 (CHSD…EALP), 124–163 (PEELPVDVLQFHPTADGVLVSTAGRTVKVWDVAKQQHLTE), 166–205 (AHKDLVQSAVWSRDGATVGTACKDKQLRIFDPRARAQASQ), and 209–253 (AHEN…SALA). A disordered region spans residues 386-462 (NPAHRPHPRF…TSPSQRSLQS (77 aa)). Residues 423 to 456 (SEGFSSPSSLVSPSTPSSLGLSLSSTSGIGTSPS) are compositionally biased toward low complexity. Phosphoserine is present on residues serine 459 and serine 462. Lysine 469 is covalently cross-linked (Glycyl lysine isopeptide (Lys-Gly) (interchain with G-Cter in ubiquitin)). WD repeat units follow at residues 539 to 579 (QNGA…LKNV), 589 to 629 (GHTE…EQLR), 632 to 671 (GHQDQIFSLAWSPDGKQLATVCKDGRVRVYDPRSSPLPLQ), and 725 to 765 (DVAP…PFFL). A disordered region spans residues 854–922 (LQPPGMTPVS…FEGVDEDEWD (69 aa)). Position 874 is a phosphothreonine (threonine 874). The span at 881 to 893 (LEEKSDQQKKEEL) shows a compositional bias: basic and acidic residues. The residue at position 912 (serine 912) is a Phosphoserine.

The protein belongs to the WD repeat coronin family. As to quaternary structure, interacts with clathrin adapter AP1 complex. This interaction takes place at Golgi membranes and not AP1-positive endosomal membranes. Interacts (when ubiquitinated at Lys-469) with EPS15. The membrane-associated form is phosphorylated on tyrosine residues. Post-translationally, ubiquitinated via 'Lys-33'-linked ubiquitin chains by the BCR(KLHL20) E3 ubiquitin ligase complex: 'Lys-33'-linked ubiquitination promotes interaction with EPS15 and facilitates actin polymerization at the trans-Golgi network, thereby facilitating post-Golgi trafficking. Deubiquitinated by ZRANB1/TRABID.

It is found in the golgi apparatus membrane. It localises to the golgi apparatus. Its subcellular location is the trans-Golgi network. The protein resides in the cytoplasmic vesicle. The protein localises to the cytoplasm. It is found in the cytosol. F-actin regulator involved in anterograde Golgi to endosome transport: upon ubiquitination via 'Lys-33'-linked ubiquitin chains by the BCR(KLHL20) E3 ubiquitin ligase complex, interacts with EPS15 and localizes to the trans-Golgi network, where it promotes actin polymerization, thereby facilitating post-Golgi trafficking. May play a role in the maintenance of the Golgi apparatus morphology. The polypeptide is Coronin-7 (Coro7) (Rattus norvegicus (Rat)).